Reading from the N-terminus, the 445-residue chain is Inner membrane metabolite transport protein YgcS (445 aa).

At 1–22 (MNTSPVRMDDLPLNRFHCRIAA) the chain is on the cytoplasmic side. The helical transmembrane segment at 23–43 (LTFGAHLTDGYVLGVIGYAII) threads the bilayer. The Periplasmic segment spans residues 44-56 (QLTPAMQLTPFMA). Residues 57–77 (GMIGGSALLGLFLGSLVLGWI) form a helical membrane-spanning segment. The Cytoplasmic portion of the chain corresponds to 78–85 (SDHIGRQK). The helical transmembrane segment at 86–106 (IFTFSFLLITLASFLQFFATT) threads the bilayer. The Periplasmic portion of the chain corresponds to 107–114 (PEHLIGLR). Residues 115–135 (ILIGIGLGGDYSVGHTLLAEF) form a helical membrane-spanning segment. Over 136-142 (SPRRHRG) the chain is Cytoplasmic. The helical transmembrane segment at 143-163 (ILLGAFSVVWTVGYVLASIAG) threads the bilayer. Residues 164–175 (HHFISENPEAWR) lie on the Periplasmic side of the membrane. Residues 176–196 (WLLASAALPALLITLLRWGTP) traverse the membrane as a helical segment. The Cytoplasmic segment spans residues 197 to 253 (ESPRWLLRQGRFAEAHAIVHRYFGPHVLLGDEVVTATHKHIKTLFSSRYWRRTAFNS). A helical membrane pass occupies residues 254–274 (VFFVCLVIPWFVIYTWLPTIA). At 275-286 (QTIGLEDALTAS) the chain is on the periplasmic side. The helical transmembrane segment at 287–307 (LMLNALLIVGALLGLVLTHLL) threads the bilayer. At 308 to 311 (AHRK) the chain is on the cytoplasmic side. The chain crosses the membrane as a helical span at residues 312-332 (FLLGSFLLLAATLVVMACLPS). At 333–337 (GSSLT) the chain is on the periplasmic side. Residues 338–358 (LLLFVLFSTTISAVSNLVGIL) form a helical membrane-spanning segment. At 359-369 (PAESFPTDIRS) the chain is on the cytoplasmic side. Residues 370–390 (LGVGFATAMSRLGAAVSTGLL) traverse the membrane as a helical segment. Residues 391 to 400 (PWVLAQWGMQ) lie on the Periplasmic side of the membrane. Residues 401-421 (VTLLLLATVLLVGFVVTWLWA) form a helical membrane-spanning segment. At 422–445 (PETKALPLVAAGNVGGANEHSVSV) the chain is on the cytoplasmic side.

The protein belongs to the major facilitator superfamily. Sugar transporter (TC 2.A.1.1) family.

The protein resides in the cell inner membrane. In Escherichia coli (strain K12), this protein is Inner membrane metabolite transport protein YgcS (ygcS).